Reading from the N-terminus, the 74-residue chain is Antimicrobial peptide HsAp4 (74 aa).

The signal sequence occupies residues 1 to 21; that stretch reads MSRRRILILVLVTMLVKTMAG. Residues 22-33 constitute a propeptide that is removed on maturation; sequence MESKWVETTYEI. Position 65 is an arginine amide (arginine 65). A propeptide spanning residues 69-74 is cleaved from the precursor; the sequence is AISEQT.

It belongs to the non-disulfide-bridged peptide (NDBP) superfamily. Medium-length antimicrobial peptide (group 3) family. Expressed by the venom gland.

It localises to the secreted. The protein localises to the target cell membrane. Functionally, possesses antimicrobial activity against both Gram-negative and Gram-positive bacteria, as well as against the fungus C.tropicalis. Also possesses a relatively high hemolytic activity. May act by disrupting the integrity of the bacterial cell membrane. This chain is Antimicrobial peptide HsAp4, found in Heterometrus spinifer (Asia giant forest scorpion).